The sequence spans 95 residues: Head virion protein G6P (95 aa).

3 helical membrane passes run 20 to 40 (LFVM…TLLP), 44 to 64 (FMKG…ILWF), and 66 to 86 (DVFM…FFLL).

It belongs to the inovirus G6P protein family. As to quaternary structure, interacts with G3P; this interaction is required for proper integration of G3P and G6P into the virion.

Its subcellular location is the virion. It is found in the host membrane. In terms of biological role, plays essential roles both in the entry of the viral genome into the bacterial host and in budding process. The formation of the G3P-G6P complex termed adsorption complex is essential for correct termination of filamentous phage assembly. This is Head virion protein G6P (VI) from Xanthomonas phage phiLf (Bacteriophage phi-Lf).